The primary structure comprises 228 residues: Urease accessory protein UreF (228 aa).

Belongs to the UreF family. In terms of assembly, ureD, UreF and UreG form a complex that acts as a GTP-hydrolysis-dependent molecular chaperone, activating the urease apoprotein by helping to assemble the nickel containing metallocenter of UreC. The UreE protein probably delivers the nickel.

Its subcellular location is the cytoplasm. Its function is as follows. Required for maturation of urease via the functional incorporation of the urease nickel metallocenter. This is Urease accessory protein UreF from Prochlorococcus marinus (strain AS9601).